Here is a 103-residue protein sequence, read N- to C-terminus: Small ribosomal subunit protein bS18c (103 aa).

The protein belongs to the bacterial ribosomal protein bS18 family. As to quaternary structure, part of the 30S ribosomal subunit.

Its subcellular location is the plastid. The protein localises to the chloroplast. The sequence is that of Small ribosomal subunit protein bS18c from Buxus microphylla (Littleleaf boxwood).